The following is a 401-amino-acid chain: Inactive leucine-rich repeat receptor-like protein kinase CORYNE (401 aa).

Positions 1 to 33 (MKQRRRRNGCSSSNTISLLLLFFLVFFSRTSTS) are cleaved as a signal peptide. Residues 34–62 (TSCRRRTVKHLSTTSTSSTPLESRITSKV) lie on the Extracellular side of the membrane. Residues 63–83 (IVISIVSGILTGLVSALVLAF) form a helical membrane-spanning segment. Topologically, residues 84-401 (LVRSIVKFMK…VHMLTQLHSF (318 aa)) are cytoplasmic. One can recognise a Protein kinase domain in the interval 118 to 401 (SNGIQLLGSD…VHMLTQLHSF (284 aa)). ATP contacts are provided by residues 124-132 (LGSDLNGKY) and K146.

The protein belongs to the protein kinase superfamily. Ser/Thr protein kinase family. Self-interacts. Parts of a tetrameric complex made of two CLV2/CRN heterodimers that can interact with CLV3 and CLE peptides. CLV2/CRN heterodimer interacts with CLV1 homodimers. Interacts with CLV1 and CLV2. CLV2/CRN heterodimer can interact with BAM3. In terms of tissue distribution, present in roots, stems, leaves, inflorescence, flowers and siliques. Mostly expressed in shoot tips and, to a lesser extent, in young organs and roots. Also expressed in the inner tissues of the proximal root meristem. Expressed in the vascular cylinder of root tips, mostly in phloem poles.

The protein localises to the cell membrane. It localises to the endoplasmic reticulum membrane. In terms of biological role, involved in the perception of CLV3 and CLV3-like (CLE) peptides, that act as extracellular signals regulating meristem maintenance. Modulates root, shoot and flower apical meristem maintenance and floral organ development regulation, probably via CLAVATA (CLV)-like pathways involving at least CLV3 and CLE19. In complex with CLV2, perceives secreted CLV3-like effector proteins from plant-parasitic cyst nematodes as ligand mimics of the plant CLE signaling pathway. This recognition is required for proper feeding structure (syncytium) development and ultimately successful nematode infection. CLE14 perception by CLV2/CRN complex triggers root meristem differentiation. Required for the sensing of the root CLE peptides (e.g. CLE8, CLE9/CLE10, CLE11, CLE13, CLE14, CLE16, CLE17, CLE18, CLE20, CLE21, CLE25, CLE26, CLE40, CLE41/CLE44 and CLE45), which also involves CLV2 and leads to root growth regulation, mostly in the phloem and protophloem. Promotes the accumulation of BAM3, especially at later stages of protophloem development. This chain is Inactive leucine-rich repeat receptor-like protein kinase CORYNE, found in Arabidopsis thaliana (Mouse-ear cress).